We begin with the raw amino-acid sequence, 372 residues long: 4-hydroxy-3-methylbut-2-en-1-yl diphosphate synthase (flavodoxin) (372 aa).

Residues Cys270, Cys273, Cys305, and Glu312 each contribute to the [4Fe-4S] cluster site.

This sequence belongs to the IspG family. The cofactor is [4Fe-4S] cluster.

The catalysed reaction is (2E)-4-hydroxy-3-methylbut-2-enyl diphosphate + oxidized [flavodoxin] + H2O + 2 H(+) = 2-C-methyl-D-erythritol 2,4-cyclic diphosphate + reduced [flavodoxin]. Its pathway is isoprenoid biosynthesis; isopentenyl diphosphate biosynthesis via DXP pathway; isopentenyl diphosphate from 1-deoxy-D-xylulose 5-phosphate: step 5/6. Converts 2C-methyl-D-erythritol 2,4-cyclodiphosphate (ME-2,4cPP) into 1-hydroxy-2-methyl-2-(E)-butenyl 4-diphosphate. This Vibrio parahaemolyticus serotype O3:K6 (strain RIMD 2210633) protein is 4-hydroxy-3-methylbut-2-en-1-yl diphosphate synthase (flavodoxin).